We begin with the raw amino-acid sequence, 258 residues long: Acyl-[acyl-carrier-protein]--UDP-N-acetylglucosamine O-acyltransferase (258 aa).

Belongs to the transferase hexapeptide repeat family. LpxA subfamily. In terms of assembly, homotrimer.

It localises to the cytoplasm. It carries out the reaction a (3R)-hydroxyacyl-[ACP] + UDP-N-acetyl-alpha-D-glucosamine = a UDP-3-O-[(3R)-3-hydroxyacyl]-N-acetyl-alpha-D-glucosamine + holo-[ACP]. The protein operates within glycolipid biosynthesis; lipid IV(A) biosynthesis; lipid IV(A) from (3R)-3-hydroxytetradecanoyl-[acyl-carrier-protein] and UDP-N-acetyl-alpha-D-glucosamine: step 1/6. Involved in the biosynthesis of lipid A, a phosphorylated glycolipid that anchors the lipopolysaccharide to the outer membrane of the cell. The sequence is that of Acyl-[acyl-carrier-protein]--UDP-N-acetylglucosamine O-acyltransferase from Thermodesulfovibrio yellowstonii (strain ATCC 51303 / DSM 11347 / YP87).